The following is a 297-amino-acid chain: Bax inhibitor 1 (297 aa).

Over 1–53 (MSGPPPPYEEQSSHLYGQPASSQDGNAFIPEDFKYSTVVISCEPIIRQRFMHK) the chain is Lumenal. Residues 54 to 74 (VYSLLSCQLLASLSFCYWASV) traverse the membrane as a helical segment. The Cytoplasmic segment spans residues 75 to 85 (STSLQNFIMSH). A helical transmembrane segment spans residues 86-106 (IALFYICMVVSLVSCIWLAVS). The Lumenal portion of the chain corresponds to 107 to 146 (PRPEDYEASVPEPLLTGSSEEPAQEQRRLPWYVLSSYKQK). A helical membrane pass occupies residues 147-167 (LTLLSIFTLSEAYCLSLVTLA). Residues 168-171 (YDKD) lie on the Cytoplasmic side of the membrane. Residues 172 to 192 (TVLSALLITTIVVVGVSLTAL) traverse the membrane as a helical segment. At 193 to 208 (SERFENVLNSATSIYY) the chain is on the lumenal side. A helical transmembrane segment spans residues 209–229 (WLNWGLWIMIGMGLTALLFGW). The Cytoplasmic segment spans residues 230-239 (NTHSSKFNLL). A helical membrane pass occupies residues 240 to 260 (YGWLGAILFTAYLFIDTQLIF). Residues 261–270 (RKVYPDEEVR) lie on the Lumenal side of the membrane. A helical transmembrane segment spans residues 271 to 291 (CAMMLYLDIVNLFLSILRILA). The Cytoplasmic portion of the chain corresponds to 292–297 (NSNDDN).

It belongs to the BI1 family. LFG subfamily.

The protein resides in the endoplasmic reticulum membrane. Its subcellular location is the vacuole membrane. It localises to the mitochondrion membrane. Its function is as follows. Links the unfolded protein response and programmed cell death and mediates mitochondrial-dependent apoptosis. Induces cell death and disruption of the mitochondrial transmembrane potential via the mitochondrial phosphate carrier MIR1. Dispensible for starvation-induced autophagy. The sequence is that of Bax inhibitor 1 (BXI1) from Saccharomyces cerevisiae (strain ATCC 204508 / S288c) (Baker's yeast).